We begin with the raw amino-acid sequence, 233 residues long: Mediator of RNA polymerase II transcription subunit 7 (233 aa).

Lys185 is covalently cross-linked (Glycyl lysine isopeptide (Lys-Gly) (interchain with G-Cter in SUMO1); alternate). A Glycyl lysine isopeptide (Lys-Gly) (interchain with G-Cter in SUMO2); alternate cross-link involves residue Lys185. Residues 188–213 are disordered; that stretch reads PMDADDSNNCTGQSDQQRENSGHRRD. Ser194 carries the post-translational modification Phosphoserine. The segment covering 203-213 has biased composition (basic and acidic residues); sequence QQRENSGHRRD.

It belongs to the Mediator complex subunit 7 family. In terms of assembly, component of the Mediator complex, which is composed of MED1, MED4, MED6, MED7, MED8, MED9, MED10, MED11, MED12, MED13, MED13L, MED14, MED15, MED16, MED17, MED18, MED19, MED20, MED21, MED22, MED23, MED24, MED25, MED26, MED27, MED29, MED30, MED31, CCNC, CDK8 and CDC2L6/CDK11. The MED12, MED13, CCNC and CDK8 subunits form a distinct module termed the CDK8 module. Mediator containing the CDK8 module is less active than Mediator lacking this module in supporting transcriptional activation. Individual preparations of the Mediator complex lacking one or more distinct subunits have been variously termed ARC, CRSP, DRIP, PC2, SMCC and TRAP.

It localises to the nucleus. Its function is as follows. Component of the Mediator complex, a coactivator involved in the regulated transcription of nearly all RNA polymerase II-dependent genes. Mediator functions as a bridge to convey information from gene-specific regulatory proteins to the basal RNA polymerase II transcription machinery. Mediator is recruited to promoters by direct interactions with regulatory proteins and serves as a scaffold for the assembly of a functional preinitiation complex with RNA polymerase II and the general transcription factors. This is Mediator of RNA polymerase II transcription subunit 7 (MED7) from Sus scrofa (Pig).